A 205-amino-acid chain; its full sequence is Regulatory protein RecX (205 aa).

This sequence belongs to the RecX family.

Its subcellular location is the cytoplasm. In terms of biological role, modulates RecA activity. This is Regulatory protein RecX from Finegoldia magna (strain ATCC 29328 / DSM 20472 / WAL 2508) (Peptostreptococcus magnus).